Here is a 475-residue protein sequence, read N- to C-terminus: Zinc-regulated GTPase metalloprotein activator 1 (475 aa).

Residue 50 to 57 coordinates GTP; sequence GFLGSGKT. Zn(2+) is bound by residues cysteine 116, cysteine 118, and cysteine 119. The CXCC motif motif lies at 116-119; it reads CICC. GTP-binding positions include 119–123 and 229–232; these read CTMRE and NKCD. Residues 302–420 enclose the CobW C-terminal domain; the sequence is IKSFIYKARR…LIESELNNCL (119 aa). Residues 440 to 467 adopt a coiled-coil conformation; it reads IQLDEELEEEELEEEEEEGEYKDEIEMK. The span at 445–460 shows a compositional bias: acidic residues; that stretch reads ELEEEELEEEEEEGEY. Positions 445-475 are disordered; it reads ELEEEELEEEEEEGEYKDEIEMKVDGSKFKK. Residues 461–475 show a composition bias toward basic and acidic residues; sequence KDEIEMKVDGSKFKK.

Belongs to the SIMIBI class G3E GTPase family. ZNG1 subfamily.

The enzyme catalyses GTP + H2O = GDP + phosphate + H(+). Zinc chaperone that directly transfers zinc cofactor to target metalloproteins, thereby activating them. Zinc is transferred from the CXCC motif in the GTPase domain to the zinc binding site in target proteins in a process requiring GTP hydrolysis. The protein is Zinc-regulated GTPase metalloprotein activator 1 of Dictyostelium discoideum (Social amoeba).